The chain runs to 516 residues: Probable cytochrome P450 9f2 (516 aa).

Residue Cys-460 coordinates heme.

Belongs to the cytochrome P450 family. The cofactor is heme.

It is found in the endoplasmic reticulum membrane. The protein localises to the microsome membrane. Its function is as follows. May be involved in the metabolism of insect hormones and in the breakdown of synthetic insecticides. The protein is Probable cytochrome P450 9f2 (Cyp9f2) of Drosophila melanogaster (Fruit fly).